The following is a 294-amino-acid chain: tRNA pseudouridine synthase B (294 aa).

Asp-39 serves as the catalytic Nucleophile.

This sequence belongs to the pseudouridine synthase TruB family. Type 1 subfamily.

The enzyme catalyses uridine(55) in tRNA = pseudouridine(55) in tRNA. Functionally, responsible for synthesis of pseudouridine from uracil-55 in the psi GC loop of transfer RNAs. This chain is tRNA pseudouridine synthase B, found in Streptococcus pyogenes serotype M5 (strain Manfredo).